The chain runs to 88 residues: Class II hydrophobin 5 (88 aa).

The N-terminal stretch at 1 to 14 (MQFLVLALASLAAA) is a signal peptide. Intrachain disulfides connect Cys27-Cys73, Cys35-Cys64, Cys36-Cys48, and Cys74-Cys85.

Belongs to the cerato-ulmin hydrophobin family. In terms of assembly, homotetramer. Further self-assembles to form highly ordered films at water-air interfaces through intermolecular interactions. As to expression, only appears on young aerial hyphae. HCf-5 is the most abundant transcript in sporulating mycelium.

It is found in the secreted. It localises to the cell wall. Functionally, aerial growth, conidiation, and dispersal of filamentous fungi in the environment rely upon a capability of their secreting small amphipathic proteins called hydrophobins (HPBs) with low sequence identity. Class I can self-assemble into an outermost layer of rodlet bundles on aerial cell surfaces, conferring cellular hydrophobicity that supports fungal growth, development and dispersal; whereas Class II form highly ordered films at water-air interfaces through intermolecular interactions but contribute nothing to the rodlet structure. The protein is Class II hydrophobin 5 of Passalora fulva (Tomato leaf mold).